The sequence spans 228 residues: Ribonuclease 3 (228 aa).

One can recognise an RNase III domain in the interval 3–132 (IRPLEEHLGI…FLGALYLDQG (130 aa)). Glu-45 contributes to the Mg(2+) binding site. Residue Asp-49 is part of the active site. 2 residues coordinate Mg(2+): Asp-118 and Glu-121. Glu-121 is a catalytic residue. The 70-residue stretch at 158–227 (DYKSQLQEFV…AKNALDSINN (70 aa)) folds into the DRBM domain. Residues 205–228 (GTGRTKKEAEQRAAKNALDSINNS) form a disordered region.

This sequence belongs to the ribonuclease III family. Homodimer. Mg(2+) serves as cofactor.

The protein resides in the cytoplasm. It carries out the reaction Endonucleolytic cleavage to 5'-phosphomonoester.. Digests double-stranded RNA. Involved in the processing of primary rRNA transcript to yield the immediate precursors to the large and small rRNAs (23S and 16S). Processes some mRNAs, and tRNAs when they are encoded in the rRNA operon. Processes pre-crRNA and tracrRNA of type II CRISPR loci if present in the organism. This is Ribonuclease 3 from Oceanobacillus iheyensis (strain DSM 14371 / CIP 107618 / JCM 11309 / KCTC 3954 / HTE831).